We begin with the raw amino-acid sequence, 548 residues long: Tripartite motif-containing protein 55 (548 aa).

Residues 10–66 (FSKEQQTMDNLEKQLICPICLEMFTKPVVILPCQHNLCRKCASDIFQASNPYLPTRG) form an RING-type zinc finger. The segment at 103 to 145 (NIIDIYKQESTRPEKKSDQPMCEEHEEERINIYCLNCEVPTCS) adopts a B box-type zinc-finger fold. Residues C124, H127, C147, and H153 each coordinate Zn(2+). The stretch at 168–248 (QKSELSDGIA…EKLEHVRALI (81 aa)) forms a coiled coil. The region spanning 269-327 (MDEPEMAVFLQNAKTLLKKISEASKAFQMEKIEHGYENMNHFTVNLNREEKIIREIDFY) is the COS domain. Positions 326 to 532 (FYREDEDEEE…PASGSGADSE (207 aa)) are disordered. Composition is skewed to acidic residues over residues 328–339 (REDEDEEEEEGG) and 347–360 (GEVGGEAVEVEEVE). 2 stretches are compositionally biased toward low complexity: residues 484–496 (VAAAAASERAAVS) and 512–531 (EAPPLQGQAAAPASGSGADS).

Homooligomer and heterooligomer. Interacts with titin/TTN. Interacts with myosins. Interacts with SQSTM1 and NBR1. Isoform 4 may not able to interact with isoform 1, isoform 2 and isoform 3. Probably interacts with TRIM63 and TRIM54. Targeted for degradation through the proteasomal and lysosomal pathways in the presence of SUMO3. Highly expressed in muscle. Low-level expression in liver.

The protein localises to the nucleus. The protein resides in the cytoplasm. It catalyses the reaction S-ubiquitinyl-[E2 ubiquitin-conjugating enzyme]-L-cysteine + [acceptor protein]-L-lysine = [E2 ubiquitin-conjugating enzyme]-L-cysteine + N(6)-ubiquitinyl-[acceptor protein]-L-lysine.. In terms of biological role, E3 ubiquitin ligase that plays an important role in regulating cardiac development and contractility, muscle growth, metabolism, and fiber-type differentiation. Acts as a critical factor that regulates cardiomyocyte size during development in concert with TRIM63 by regulating E2F1-mediated gene expression. Plays a role in apoptosis induction in cardiomyocytes by promoting ubiquitination of the DUSP1 phosphatase. Promotes non-canonical NF-kappa-B signaling and B-cell-mediated immune responses by mediating NFKB2 'Lys-48'-linked ubiquitination and processing. In turn, NFKB2 is further processed by valosin-containing protein/VCP, an ATPase that mediates ubiquitin-dependent protein degradation by the proteasome. May play a role in preventing macrophages from producing inflammatory factors and migrating by downregulating the level of nuclear NF-kappa-B subunit RELA. Also modifies PPARG via polyubiquitination and accelerates PPARG proteasomal degradation to inhibit its activity. In Homo sapiens (Human), this protein is Tripartite motif-containing protein 55 (TRIM55).